The primary structure comprises 85 residues: Large ribosomal subunit protein bL27 (85 aa).

The disordered stretch occupies residues 1–21 (MAHKKAGGSTRNGRDSRGKRL).

Belongs to the bacterial ribosomal protein bL27 family.

The sequence is that of Large ribosomal subunit protein bL27 from Blochmanniella floridana.